The primary structure comprises 133 residues: Ribosome-binding factor A (133 aa).

The protein belongs to the RbfA family. In terms of assembly, monomer. Binds 30S ribosomal subunits, but not 50S ribosomal subunits or 70S ribosomes.

It is found in the cytoplasm. Its function is as follows. One of several proteins that assist in the late maturation steps of the functional core of the 30S ribosomal subunit. Associates with free 30S ribosomal subunits (but not with 30S subunits that are part of 70S ribosomes or polysomes). Required for efficient processing of 16S rRNA. May interact with the 5'-terminal helix region of 16S rRNA. The protein is Ribosome-binding factor A of Chlamydia muridarum (strain MoPn / Nigg).